Consider the following 145-residue polypeptide: 3-dehydroquinate dehydratase (145 aa).

Tyr22 functions as the Proton acceptor in the catalytic mechanism. Positions 74, 80, and 87 each coordinate substrate. The active-site Proton donor is His100. Substrate-binding positions include 101 to 102 (IS) and Arg111.

It belongs to the type-II 3-dehydroquinase family. Homododecamer.

The catalysed reaction is 3-dehydroquinate = 3-dehydroshikimate + H2O. It functions in the pathway metabolic intermediate biosynthesis; chorismate biosynthesis; chorismate from D-erythrose 4-phosphate and phosphoenolpyruvate: step 3/7. Catalyzes a trans-dehydration via an enolate intermediate. This chain is 3-dehydroquinate dehydratase, found in Lachnoclostridium phytofermentans (strain ATCC 700394 / DSM 18823 / ISDg) (Clostridium phytofermentans).